The chain runs to 220 residues: Iron-sulfur cluster repair protein YtfE (220 aa).

Belongs to the RIC family. YtfE subfamily. In terms of assembly, homodimer.

It is found in the cytoplasm. Di-iron-containing protein involved in the repair of iron-sulfur clusters damaged by oxidative and nitrosative stress conditions. The sequence is that of Iron-sulfur cluster repair protein YtfE from Escherichia coli O6:K15:H31 (strain 536 / UPEC).